Here is a 148-residue protein sequence, read N- to C-terminus: Trypsin inhibitor CMe (148 aa).

Positions 1–24 (MAFKYQLLLSAAVMLAILVATATS) are cleaved as a signal peptide.

It belongs to the protease inhibitor I6 (cereal trypsin/alpha-amylase inhibitor) family. Five disulfide bonds, which are essential for the inhibitor activity, are probably present. As to expression, expressed in the developing endosperm. Not detected in embryo, aleurone, coleoptile, roots and leaves.

It is found in the secreted. In terms of biological role, inhibits trypsin in vitro. Probably plays a protective role through inhibition of insect midgut proteases. The chain is Trypsin inhibitor CMe (ITR1) from Hordeum vulgare (Barley).